The following is an 867-amino-acid chain: Leucine--tRNA ligase (867 aa).

Residues 57 to 67 (PYPSGTLHMGH) carry the 'HIGH' region motif. The interval 308 to 327 (SQDERTSDDQPKRGVPTGAV) is disordered. The span at 309–319 (QDERTSDDQPK) shows a compositional bias: basic and acidic residues. The 'KMSKS' region motif lies at 631–635 (KMSKS). Lys634 provides a ligand contact to ATP.

It belongs to the class-I aminoacyl-tRNA synthetase family.

It is found in the cytoplasm. The catalysed reaction is tRNA(Leu) + L-leucine + ATP = L-leucyl-tRNA(Leu) + AMP + diphosphate. This chain is Leucine--tRNA ligase, found in Synechococcus sp. (strain CC9311).